We begin with the raw amino-acid sequence, 223 residues long: Ribonuclease T (223 aa).

In terms of domain architecture, Exonuclease spans 20 to 194 (VVIDVETAGF…YDTNQTALLF (175 aa)). Mg(2+) is bound by residues Asp-23, Glu-25, His-181, and Asp-186. His-181 serves as the catalytic Proton donor/acceptor.

This sequence belongs to the RNase T family. As to quaternary structure, homodimer. Mg(2+) serves as cofactor.

Trims short 3' overhangs of a variety of RNA species, leaving a one or two nucleotide 3' overhang. Responsible for the end-turnover of tRNA: specifically removes the terminal AMP residue from uncharged tRNA (tRNA-C-C-A). Also appears to be involved in tRNA biosynthesis. This Pectobacterium atrosepticum (strain SCRI 1043 / ATCC BAA-672) (Erwinia carotovora subsp. atroseptica) protein is Ribonuclease T.